Here is a 681-residue protein sequence, read N- to C-terminus: Hydroxyproline O-galactosyltransferase GALT6 (681 aa).

Residues 1–28 (MRKPKLSKLERLEKFDIFVSLSKQRSVQ) are Cytoplasmic-facing. A helical; Signal-anchor for type II membrane protein membrane pass occupies residues 29–49 (ILMAVGLLYMLLITFEIPFVF). The Lumenal portion of the chain corresponds to 50-681 (KTGLSSLSQD…TGKPQCCNMR (632 aa)). Positions 57–80 (SQDPLTRPEKHNSQRELQERRAPT) are disordered. The segment covering 62–78 (TRPEKHNSQRELQERRA) has biased composition (basic and acidic residues). Positions 187 to 401 (NIMELPCGLT…DIDVHSVFAG (215 aa)) constitute a Galectin domain. N-linked (GlcNAc...) asparagine glycosylation occurs at Asn629.

This sequence belongs to the glycosyltransferase 31 family. Mn(2+) serves as cofactor. Expressed in junveile leaves and stems, and at lower levels in cauline leaves and siliques.

It localises to the golgi apparatus membrane. It participates in protein modification; protein glycosylation. In terms of biological role, possesses hydroxyproline O-galactosyltransferase activity. Transfers galactose from UDP-galactose to hydroxyproline residues in the arabinogalactan proteins (AGPs). Is specific for AGPs containing non-contiguous peptidyl hydroxyproline residues. Utilizes UDP-galactose solely as sugar donor. The addition of galactose onto the peptidyl hydroxyproline residues in AGP core proteins represents the first committed step in arabinogalactan polysaccharide addition. AGP glycans play essential roles in both vegetative and reproductive plant growth. This Arabidopsis thaliana (Mouse-ear cress) protein is Hydroxyproline O-galactosyltransferase GALT6.